We begin with the raw amino-acid sequence, 813 residues long: Protein translocase subunit SecA 2 (813 aa).

ATP is bound by residues Q105, G123–T127, and D525.

This sequence belongs to the SecA family. Monomer and homodimer. Part of the essential Sec protein translocation apparatus which comprises SecA, SecYEG and auxiliary proteins SecDF-YajC and YidC.

Its subcellular location is the cell inner membrane. The protein resides in the cytoplasm. The catalysed reaction is ATP + H2O + cellular proteinSide 1 = ADP + phosphate + cellular proteinSide 2.. Part of the Sec protein translocase complex. Interacts with the SecYEG preprotein conducting channel. Has a central role in coupling the hydrolysis of ATP to the transfer of proteins into and across the cell membrane, serving both as a receptor for the preprotein-SecB complex and as an ATP-driven molecular motor driving the stepwise translocation of polypeptide chains across the membrane. The polypeptide is Protein translocase subunit SecA 2 (Rhodopseudomonas palustris (strain BisA53)).